A 214-amino-acid chain; its full sequence is ATP phosphoribosyltransferase (214 aa).

It belongs to the ATP phosphoribosyltransferase family. Short subfamily. Heteromultimer composed of HisG and HisZ subunits.

It localises to the cytoplasm. It carries out the reaction 1-(5-phospho-beta-D-ribosyl)-ATP + diphosphate = 5-phospho-alpha-D-ribose 1-diphosphate + ATP. It functions in the pathway amino-acid biosynthesis; L-histidine biosynthesis; L-histidine from 5-phospho-alpha-D-ribose 1-diphosphate: step 1/9. Its function is as follows. Catalyzes the condensation of ATP and 5-phosphoribose 1-diphosphate to form N'-(5'-phosphoribosyl)-ATP (PR-ATP). Has a crucial role in the pathway because the rate of histidine biosynthesis seems to be controlled primarily by regulation of HisG enzymatic activity. This is ATP phosphoribosyltransferase from Halorhodospira halophila (strain DSM 244 / SL1) (Ectothiorhodospira halophila (strain DSM 244 / SL1)).